A 602-amino-acid chain; its full sequence is Cholinesterase (602 aa).

Residues 1–28 form the signal peptide; sequence MQSKGTIISIQFLLRFLLLWVLIGKSHT. Asparagine 85 carries N-linked (GlcNAc...) asparagine glycosylation. A disulfide bond links cysteine 93 and cysteine 120. Asparagine 134 carries an N-linked (GlcNAc...) asparagine glycan. 144 to 145 lines the substrate pocket; the sequence is GG. Serine 226 (acyl-ester intermediate) is an active-site residue. Position 226 is a phosphoserine (serine 226). Asparagine 269 and asparagine 284 each carry an N-linked (GlcNAc...) asparagine glycan. Cysteine 280 and cysteine 291 are oxidised to a cystine. Glutamate 353 (charge relay system) is an active-site residue. Asparagine 369 is a glycosylation site (N-linked (GlcNAc...) asparagine). Cysteine 428 and cysteine 547 are oxidised to a cystine. Histidine 466 functions as the Charge relay system in the catalytic mechanism. 4 N-linked (GlcNAc...) asparagine glycosylation sites follow: asparagine 483, asparagine 509, asparagine 513, and asparagine 514.

It belongs to the type-B carboxylesterase/lipase family. As to quaternary structure, homotetramer; disulfide-linked. Dimer of dimers.

Its subcellular location is the secreted. It catalyses the reaction an acylcholine + H2O = a carboxylate + choline + H(+). Esterase with broad substrate specificity. Contributes to the inactivation of the neurotransmitter acetylcholine. Can degrade neurotoxic organophosphate esters. In Panthera tigris tigris (Bengal tiger), this protein is Cholinesterase (BCHE).